We begin with the raw amino-acid sequence, 406 residues long: Methylthioribose-1-phosphate isomerase (406 aa).

Aspartate 277 (proton donor) is an active-site residue.

It belongs to the eIF-2B alpha/beta/delta subunits family. MtnA subfamily.

It localises to the cytoplasm. The protein resides in the nucleus. The catalysed reaction is 5-(methylsulfanyl)-alpha-D-ribose 1-phosphate = 5-(methylsulfanyl)-D-ribulose 1-phosphate. It participates in amino-acid biosynthesis; L-methionine biosynthesis via salvage pathway; L-methionine from S-methyl-5-thio-alpha-D-ribose 1-phosphate: step 1/6. In terms of biological role, catalyzes the interconversion of methylthioribose-1-phosphate (MTR-1-P) into methylthioribulose-1-phosphate (MTRu-1-P). The sequence is that of Methylthioribose-1-phosphate isomerase from Debaryomyces hansenii (strain ATCC 36239 / CBS 767 / BCRC 21394 / JCM 1990 / NBRC 0083 / IGC 2968) (Yeast).